The following is a 485-amino-acid chain: Bindin (485 aa).

Positions 1 to 20 (MGFHQISVIIVVLALASARA) are cleaved as a signal peptide. A propeptide spanning residues 21-247 (ADEFPSHTDT…DSERGARKKR (227 aa)) is cleaved from the precursor. 3 disordered regions span residues 157–195 (GETR…DLAP), 219–273 (ISGH…PAQQ), and 305–331 (GGGQ…SDSL). Over residues 172–192 (DVSKRASPRKGDEPAGHKLKD) the composition is skewed to basic and acidic residues. Positions 250-264 (NQGNYPQAMNPQSRG) are enriched in polar residues. A compositionally biased stretch (acidic residues) spans 317–331 (AEADNADYDEYSDSL). The segment at 371–379 (LRHLRHHSN) is fucose-binding domain. Residues 459-485 (QQGMGGVPQRMGGQPQGNAYNQGYRQG) form a disordered region. The span at 465 to 475 (VPQRMGGQPQG) shows a compositional bias: low complexity. The segment covering 476-485 (NAYNQGYRQG) has biased composition (polar residues).

Belongs to the bindin family.

It localises to the cytoplasmic vesicle. It is found in the secretory vesicle. Its subcellular location is the acrosome lumen. Functionally, species-specific sea urchin sperm protein required for adhesion of sperm to the egg surface during fertilization. Bindin coats the acrosomal process after it is externalized by the acrosome reaction. It binds to sulfated, fucose-containing polysaccharides on the vitelline layer receptor proteoglycans which cover the egg plasma membrane. The sequence is that of Bindin from Mesocentrotus franciscanus (Giant red sea urchin).